The chain runs to 245 residues: 14-3-3 protein zeta/delta (245 aa).

An N-acetylmethionine modification is found at Met-1. Lys-3 is modified (N6-acetyllysine). Residue Ser-58 is modified to Phosphoserine; by PKA. Residue Lys-68 is modified to N6-acetyllysine. Phosphoserine occurs at positions 184, 207, and 210. The residue at position 232 (Thr-232) is a Phosphothreonine; by CK1.

Belongs to the 14-3-3 family. In terms of assembly, homodimer. Heterodimerizes with YWHAE. Homo- and heterodimerization is inhibited by phosphorylation on Ser-58. Interacts with FOXO4, NOXA1, SSH1 and ARHGEF2. Interacts with CDK16 and with WEE1 (C-terminal). Interacts with MLF1 (phosphorylated form); the interaction retains it in the cytoplasm. Interacts with BSPRY. Interacts with Thr-phosphorylated ITGB2. Interacts with Pseudomonas aeruginosa exoS (unphosphorylated form). Interacts with BAX; the interaction occurs in the cytoplasm. Under stress conditions, MAPK8-mediated phosphorylation releases BAX to mitochondria. Interacts with phosphorylated RAF1; the interaction is inhibited when YWHAZ is phosphorylated on Thr-232. Interacts with TP53; the interaction enhances p53 transcriptional activity. The Ser-58 phosphorylated form inhibits this interaction and p53 transcriptional activity. Interacts with ABL1 (phosphorylated form); the interaction retains ABL1 in the cytoplasm. Interacts with PKA-phosphorylated AANAT; the interaction modulates AANAT enzymatic activity by increasing affinity for arylalkylamines and acetyl-CoA and protecting the enzyme from dephosphorylation and proteasomal degradation. It may also prevent thiol-dependent inactivation. Interacts with AKT1; the interaction phosphorylates YWHAZ and modulates dimerization. Interacts with GAB2. Interacts with SAMSN1. Interacts with BCL2L11 and TLK2. Interacts with the 'Thr-369' phosphorylated form of DAPK2. Interacts with PI4KB, TBC1D22A and TBC1D22B. Interacts with ZFP36L1 (via phosphorylated form); this interaction occurs in a p38 MAPK- and AKT-signaling pathways. Interacts with SLITRK1. Interacts with AK5, LDB1, MADD, PDE1A and SMARCB1. Interacts with ARHGEF7 and GIT1. Interacts with MEFV. Interacts with ADAM22 (via C-terminus). In terms of processing, the delta, brain-specific form differs from the zeta form in being phosphorylated. Phosphorylation on Ser-184 by MAPK8; promotes dissociation of BAX and translocation of BAX to mitochondria. Phosphorylation on Thr-232; inhibits binding of RAF1. Phosphorylated on Ser-58 by PKA and protein kinase C delta type catalytic subunit in a sphingosine-dependent fashion. Phosphorylation on Ser-58 by PKA; disrupts homodimerization and heterodimerization with YHAE and TP53.

The protein localises to the cytoplasm. It localises to the melanosome. Adapter protein implicated in the regulation of a large spectrum of both general and specialized signaling pathways. Binds to a large number of partners, usually by recognition of a phosphoserine or phosphothreonine motif. Binding generally results in the modulation of the activity of the binding partner. Promotes cytosolic retention and inactivation of TFEB transcription factor by binding to phosphorylated TFEB. Induces ARHGEF7 activity on RAC1 as well as lamellipodia and membrane ruffle formation. In neurons, regulates spine maturation through the modulation of ARHGEF7 activity. This is 14-3-3 protein zeta/delta (Ywhaz) from Mus musculus (Mouse).